The chain runs to 83 residues: Small ribosomal subunit protein eS27 (83 aa).

The C4-type zinc finger occupies 37 to 59 (CSGCFKISTVFSHATTVVVCVGC).

It belongs to the eukaryotic ribosomal protein eS27 family. The cofactor is Zn(2+).

The polypeptide is Small ribosomal subunit protein eS27 (rps-27) (Caenorhabditis elegans).